We begin with the raw amino-acid sequence, 444 residues long: Proline--tRNA ligase (444 aa).

It belongs to the class-II aminoacyl-tRNA synthetase family. ProS type 2 subfamily. As to quaternary structure, homodimer.

The protein resides in the cytoplasm. It carries out the reaction tRNA(Pro) + L-proline + ATP = L-prolyl-tRNA(Pro) + AMP + diphosphate. Functionally, catalyzes the attachment of proline to tRNA(Pro) in a two-step reaction: proline is first activated by ATP to form Pro-AMP and then transferred to the acceptor end of tRNA(Pro). This Pelagibacter ubique (strain HTCC1062) protein is Proline--tRNA ligase.